A 345-amino-acid polypeptide reads, in one-letter code: Heat-inducible transcription repressor HrcA (345 aa).

It belongs to the HrcA family.

Its function is as follows. Negative regulator of class I heat shock genes (grpE-dnaK-dnaJ and groELS operons). Prevents heat-shock induction of these operons. The protein is Heat-inducible transcription repressor HrcA of Listeria monocytogenes serotype 1/2a (strain 10403S).